We begin with the raw amino-acid sequence, 526 residues long: Peptide chain release factor 3 (526 aa).

The 270-residue stretch at 8–277 (SKRRTFAIIS…GLTRWAPAPQ (270 aa)) folds into the tr-type G domain. GTP is bound by residues 17-24 (SHPDAGKT), 85-89 (DTPGH), and 139-142 (NKLD).

Belongs to the TRAFAC class translation factor GTPase superfamily. Classic translation factor GTPase family. PrfC subfamily.

The protein resides in the cytoplasm. Its function is as follows. Increases the formation of ribosomal termination complexes and stimulates activities of RF-1 and RF-2. It binds guanine nucleotides and has strong preference for UGA stop codons. It may interact directly with the ribosome. The stimulation of RF-1 and RF-2 is significantly reduced by GTP and GDP, but not by GMP. In Vibrio atlanticus (strain LGP32) (Vibrio splendidus (strain Mel32)), this protein is Peptide chain release factor 3.